The chain runs to 260 residues: Hydroxyethylthiazole kinase 1 (260 aa).

Residue M39 participates in substrate binding. Residues R115 and T160 each coordinate ATP. G187 serves as a coordination point for substrate.

The protein belongs to the Thz kinase family. It depends on Mg(2+) as a cofactor.

The catalysed reaction is 5-(2-hydroxyethyl)-4-methylthiazole + ATP = 4-methyl-5-(2-phosphooxyethyl)-thiazole + ADP + H(+). It functions in the pathway cofactor biosynthesis; thiamine diphosphate biosynthesis; 4-methyl-5-(2-phosphoethyl)-thiazole from 5-(2-hydroxyethyl)-4-methylthiazole: step 1/1. In terms of biological role, catalyzes the phosphorylation of the hydroxyl group of 4-methyl-5-beta-hydroxyethylthiazole (THZ). This is Hydroxyethylthiazole kinase 1 from Streptococcus pneumoniae (strain Hungary19A-6).